A 364-amino-acid chain; its full sequence is Glutamate 5-kinase (364 aa).

Position 7 (lysine 7) interacts with ATP. Residues serine 47, aspartate 134, and asparagine 146 each coordinate substrate. Residues 166-167 and 209-215 contribute to the ATP site; these read TD and TGGIKTK. The 76-residue stretch at 274–349 folds into the PUA domain; it reads QGTLHVDDGA…NRIKSTQYPV (76 aa).

It belongs to the glutamate 5-kinase family.

The protein resides in the cytoplasm. It catalyses the reaction L-glutamate + ATP = L-glutamyl 5-phosphate + ADP. Its pathway is amino-acid biosynthesis; L-proline biosynthesis; L-glutamate 5-semialdehyde from L-glutamate: step 1/2. Functionally, catalyzes the transfer of a phosphate group to glutamate to form L-glutamate 5-phosphate. This is Glutamate 5-kinase from Prochlorococcus marinus (strain SARG / CCMP1375 / SS120).